Reading from the N-terminus, the 257-residue chain is Imidazole glycerol phosphate synthase subunit HisF (257 aa).

Catalysis depends on residues D12 and D131.

Belongs to the HisA/HisF family. Heterodimer of HisH and HisF.

The protein localises to the cytoplasm. It carries out the reaction 5-[(5-phospho-1-deoxy-D-ribulos-1-ylimino)methylamino]-1-(5-phospho-beta-D-ribosyl)imidazole-4-carboxamide + L-glutamine = D-erythro-1-(imidazol-4-yl)glycerol 3-phosphate + 5-amino-1-(5-phospho-beta-D-ribosyl)imidazole-4-carboxamide + L-glutamate + H(+). It participates in amino-acid biosynthesis; L-histidine biosynthesis; L-histidine from 5-phospho-alpha-D-ribose 1-diphosphate: step 5/9. IGPS catalyzes the conversion of PRFAR and glutamine to IGP, AICAR and glutamate. The HisF subunit catalyzes the cyclization activity that produces IGP and AICAR from PRFAR using the ammonia provided by the HisH subunit. The chain is Imidazole glycerol phosphate synthase subunit HisF from Nocardia farcinica (strain IFM 10152).